The following is a 156-amino-acid chain: ATP synthase subunit b (156 aa).

Residues 11-31 (AIAFVLFVLFCMKYVWPPLMA) traverse the membrane as a helical segment.

Belongs to the ATPase B chain family. F-type ATPases have 2 components, F(1) - the catalytic core - and F(0) - the membrane proton channel. F(1) has five subunits: alpha(3), beta(3), gamma(1), delta(1), epsilon(1). F(0) has three main subunits: a(1), b(2) and c(10-14). The alpha and beta chains form an alternating ring which encloses part of the gamma chain. F(1) is attached to F(0) by a central stalk formed by the gamma and epsilon chains, while a peripheral stalk is formed by the delta and b chains.

It localises to the cell inner membrane. Functionally, f(1)F(0) ATP synthase produces ATP from ADP in the presence of a proton or sodium gradient. F-type ATPases consist of two structural domains, F(1) containing the extramembraneous catalytic core and F(0) containing the membrane proton channel, linked together by a central stalk and a peripheral stalk. During catalysis, ATP synthesis in the catalytic domain of F(1) is coupled via a rotary mechanism of the central stalk subunits to proton translocation. Component of the F(0) channel, it forms part of the peripheral stalk, linking F(1) to F(0). This chain is ATP synthase subunit b, found in Sodalis glossinidius (strain morsitans).